A 249-amino-acid chain; its full sequence is Probable transcriptional regulatory protein CYB_1350 (249 aa).

Belongs to the TACO1 family.

The protein resides in the cytoplasm. This Synechococcus sp. (strain JA-2-3B'a(2-13)) (Cyanobacteria bacterium Yellowstone B-Prime) protein is Probable transcriptional regulatory protein CYB_1350.